The following is a 145-amino-acid chain: 3-dehydroquinate dehydratase (145 aa).

Residue tyrosine 24 is the Proton acceptor of the active site. 3 residues coordinate substrate: asparagine 75, histidine 81, and aspartate 88. Histidine 101 functions as the Proton donor in the catalytic mechanism. Substrate contacts are provided by residues 102–103 and arginine 112; that span reads LS.

This sequence belongs to the type-II 3-dehydroquinase family. Homododecamer.

The catalysed reaction is 3-dehydroquinate = 3-dehydroshikimate + H2O. The protein operates within metabolic intermediate biosynthesis; chorismate biosynthesis; chorismate from D-erythrose 4-phosphate and phosphoenolpyruvate: step 3/7. Functionally, catalyzes a trans-dehydration via an enolate intermediate. The protein is 3-dehydroquinate dehydratase of Phenylobacterium zucineum (strain HLK1).